Reading from the N-terminus, the 426-residue chain is Synaptotagmin-13 (426 aa).

The Vesicular segment spans residues 1–6 (MVLSVP). Residues 7–29 (VIALGATLGTATSILALCGVTCL) traverse the membrane as a helical segment. At 30–426 (CRHMHPKKGL…QIAMWHQLHL (397 aa)) the chain is on the cytoplasmic side. C2 domains lie at 158-275 (QAPK…AQWG) and 287-422 (GAGE…AMWH).

Belongs to the synaptotagmin family. Interacts with NRXN1. Expressed in brain, heart, spleen, lung and testis.

Its subcellular location is the cytoplasmic vesicle membrane. May be involved in transport vesicle docking to the plasma membrane. This chain is Synaptotagmin-13 (Syt13), found in Mus musculus (Mouse).